A 234-amino-acid chain; its full sequence is Probable chemoreceptor glutamine deamidase CheD (234 aa).

The protein belongs to the CheD family.

It catalyses the reaction L-glutaminyl-[protein] + H2O = L-glutamyl-[protein] + NH4(+). Probably deamidates glutamine residues to glutamate on methyl-accepting chemotaxis receptors (MCPs), playing an important role in chemotaxis. This is Probable chemoreceptor glutamine deamidase CheD from Burkholderia mallei (strain NCTC 10247).